We begin with the raw amino-acid sequence, 329 residues long: tRNA dimethylallyltransferase (329 aa).

24 to 31 (GSTGIGKT) lines the ATP pocket. Substrate is bound at residue 26–31 (TGIGKT). The interaction with substrate tRNA stretch occupies residues 49-52 (DSMQ).

This sequence belongs to the IPP transferase family. In terms of assembly, monomer. Mg(2+) is required as a cofactor.

It carries out the reaction adenosine(37) in tRNA + dimethylallyl diphosphate = N(6)-dimethylallyladenosine(37) in tRNA + diphosphate. Catalyzes the transfer of a dimethylallyl group onto the adenine at position 37 in tRNAs that read codons beginning with uridine, leading to the formation of N6-(dimethylallyl)adenosine (i(6)A). In Methylacidiphilum infernorum (isolate V4) (Methylokorus infernorum (strain V4)), this protein is tRNA dimethylallyltransferase.